The sequence spans 297 residues: GTPase Era (297 aa).

Residues 7–174 (RSGFVSIVGR…VQLVHGLLPE (168 aa)) form the Era-type G domain. The interval 15–22 (GRPNVGKS) is G1. 15–22 (GRPNVGKS) is a binding site for GTP. The tract at residues 41-45 (QTTRN) is G2. Positions 62–65 (DTPG) are G3. Residues 62–66 (DTPGI) and 124–127 (NKID) each bind GTP. The tract at residues 124 to 127 (NKID) is G4. A G5 region spans residues 153 to 155 (VSA). In terms of domain architecture, KH type-2 spans 205–282 (THDEVPYSTA…FLELFVRVSG (78 aa)).

It belongs to the TRAFAC class TrmE-Era-EngA-EngB-Septin-like GTPase superfamily. Era GTPase family. In terms of assembly, monomer.

Its subcellular location is the cytoplasm. It is found in the cell inner membrane. Functionally, an essential GTPase that binds both GDP and GTP, with rapid nucleotide exchange. Plays a role in 16S rRNA processing and 30S ribosomal subunit biogenesis and possibly also in cell cycle regulation and energy metabolism. This is GTPase Era from Geobacter sp. (strain M21).